Consider the following 122-residue polypeptide: UPF0102 protein CPR_1677 (122 aa).

The protein belongs to the UPF0102 family.

In Clostridium perfringens (strain SM101 / Type A), this protein is UPF0102 protein CPR_1677.